The primary structure comprises 118 residues: Succinate dehydrogenase assembly factor 1, mitochondrial (118 aa).

Positions 14 to 16 (LYR) match the LYR motif 1; required for interaction with HSC20 motif. The LYR motif 2; not required for interaction with HSC20 signature appears at 53 to 55 (LYR). Positions 53–65 (LYRRGRRQLQLLR) are interaction with SDHB. A disordered region spans residues 68 to 118 (HATAMGTFVRPRGPAEEPGDATAPGTRLDDGGAPKNSCEDTGARETRSDGR). Over residues 94–118 (RLDDGGAPKNSCEDTGARETRSDGR) the composition is skewed to basic and acidic residues.

The protein belongs to the complex I LYR family. SDHAF1 subfamily. As to quaternary structure, interacts with SDHB within an SDHA-SDHB subcomplex. Also interacts with the iron-sulfur transfer complex formed by HSC20, HSPA9 and ISCU through direct binding to HSC20. Binding of SDHAF1 to SDHB precedes and is necessary for recruitment of the iron-sulfur transfer complex by SDHAF1.

It is found in the mitochondrion matrix. Its function is as follows. Plays an essential role in the assembly of succinate dehydrogenase (SDH), an enzyme complex (also referred to as respiratory complex II) that is a component of both the tricarboxylic acid (TCA) cycle and the mitochondrial electron transport chain, and which couples the oxidation of succinate to fumarate with the reduction of ubiquinone (coenzyme Q) to ubiquinol. Promotes maturation of the iron-sulfur protein subunit Sdhb of the SDH catalytic dimer, protecting it from the deleterious effects of oxidants. May act together with SDHAF3. Contributes to iron-sulfur cluster incorporation into SDHB by binding to SDHB and recruiting the iron-sulfur transfer complex formed by HSC20, HSPA9 and ISCU through direct binding to HSC20. The protein is Succinate dehydrogenase assembly factor 1, mitochondrial of Mus musculus (Mouse).